The primary structure comprises 482 residues: Rho GTPase-activating protein 15 (482 aa).

Phosphoserine is present on residues Ser51, Ser111, Ser205, Ser208, and Ser250. Residues 87 to 198 form the PH domain; the sequence is MVEKEGYLQK…WFHAIKNAID (112 aa). The Rho-GAP domain occupies 288–477; that stretch reads SHLHTVCERE…FMLTEYDKIF (190 aa).

The protein resides in the cytoplasm. The protein localises to the membrane. Functionally, GTPase activator for the Rho-type GTPases by converting them to an inactive GDP-bound state. Has activity toward RAC1. Overexpression results in an increase in actin stress fibers and cell contraction. This Rattus norvegicus (Rat) protein is Rho GTPase-activating protein 15 (Arhgap15).